The sequence spans 502 residues: 4,4'-diapophytoene desaturase (4,4'-diaponeurosporene-forming) (502 aa).

5 to 17 (VIGAGVTGLAAAA) lines the FAD pocket.

It belongs to the carotenoid/retinoid oxidoreductase family. CrtN subfamily.

It carries out the reaction 15-cis-4,4'-diapophytoene + 3 FAD + 3 H(+) = all-trans-4,4'-diaponeurosporene + 3 FADH2. Its pathway is carotenoid biosynthesis; staphyloxanthin biosynthesis; staphyloxanthin from farnesyl diphosphate: step 2/5. Its function is as follows. Involved in the biosynthesis of the yellow-orange carotenoid staphyloxanthin, which plays a role in the virulence via its protective function against oxidative stress. Catalyzes three successive dehydrogenation reactions that lead to the introduction of three double bonds into 4,4'-diapophytoene (dehydrosqualene), with 4,4'-diapophytofluene and 4,4'-diapo-zeta-carotene as intermediates, and 4,4'-diaponeurosporene (the major deep-yellow pigment in staphylococci strains) as the end product. In Staphylococcus aureus (strain COL), this protein is 4,4'-diapophytoene desaturase (4,4'-diaponeurosporene-forming).